A 77-amino-acid polypeptide reads, in one-letter code: Conotoxin VnMEKL-0111 (77 aa).

The signal sequence occupies residues 1–19; it reads MEKLTILLLVAAVLMSTQA. The propeptide occupies 20 to 46; the sequence is LIQHDGEKSQKAKMKFLTARTLSAKTR. Disulfide bonds link C50–C66, C57–C71, and C65–C75.

It belongs to the conotoxin O2 superfamily. In terms of tissue distribution, expressed by the venom duct.

It is found in the secreted. In Conus ventricosus (Mediterranean cone), this protein is Conotoxin VnMEKL-0111.